Consider the following 266-residue polypeptide: Ribosomal RNA small subunit methyltransferase A (266 aa).

Positions 10, 12, 37, 58, 82, and 105 each coordinate S-adenosyl-L-methionine.

Belongs to the class I-like SAM-binding methyltransferase superfamily. rRNA adenine N(6)-methyltransferase family. RsmA subfamily.

Its subcellular location is the cytoplasm. It carries out the reaction adenosine(1518)/adenosine(1519) in 16S rRNA + 4 S-adenosyl-L-methionine = N(6)-dimethyladenosine(1518)/N(6)-dimethyladenosine(1519) in 16S rRNA + 4 S-adenosyl-L-homocysteine + 4 H(+). Functionally, specifically dimethylates two adjacent adenosines (A1518 and A1519) in the loop of a conserved hairpin near the 3'-end of 16S rRNA in the 30S particle. May play a critical role in biogenesis of 30S subunits. The chain is Ribosomal RNA small subunit methyltransferase A from Mycoplasma mycoides subsp. mycoides SC (strain CCUG 32753 / NCTC 10114 / PG1).